The chain runs to 203 residues: Holliday junction branch migration complex subunit RuvA (203 aa).

The tract at residues 1-64 is domain I; sequence MIGRLRGIII…EDAQLLYGFN (64 aa). The domain II stretch occupies residues 65-142; that stretch reads NKQERTLFKE…KGLHGDLFTP (78 aa). The tract at residues 143-154 is flexible linker; sequence AADLVLTSPASP. The tract at residues 155–203 is domain III; it reads ATDDAEQEAVAALVALGYKPQEASRMVSKIARPDASSETLIREALRAAL.

It belongs to the RuvA family. In terms of assembly, homotetramer. Forms an RuvA(8)-RuvB(12)-Holliday junction (HJ) complex. HJ DNA is sandwiched between 2 RuvA tetramers; dsDNA enters through RuvA and exits via RuvB. An RuvB hexamer assembles on each DNA strand where it exits the tetramer. Each RuvB hexamer is contacted by two RuvA subunits (via domain III) on 2 adjacent RuvB subunits; this complex drives branch migration. In the full resolvosome a probable DNA-RuvA(4)-RuvB(12)-RuvC(2) complex forms which resolves the HJ.

It is found in the cytoplasm. Functionally, the RuvA-RuvB-RuvC complex processes Holliday junction (HJ) DNA during genetic recombination and DNA repair, while the RuvA-RuvB complex plays an important role in the rescue of blocked DNA replication forks via replication fork reversal (RFR). RuvA specifically binds to HJ cruciform DNA, conferring on it an open structure. The RuvB hexamer acts as an ATP-dependent pump, pulling dsDNA into and through the RuvAB complex. HJ branch migration allows RuvC to scan DNA until it finds its consensus sequence, where it cleaves and resolves the cruciform DNA. The polypeptide is Holliday junction branch migration complex subunit RuvA (Shigella boydii serotype 18 (strain CDC 3083-94 / BS512)).